Reading from the N-terminus, the 302-residue chain is Putative gluconeogenesis factor (302 aa).

It belongs to the gluconeogenesis factor family.

It localises to the cytoplasm. In terms of biological role, required for morphogenesis under gluconeogenic growth conditions. This Escherichia coli O157:H7 protein is Putative gluconeogenesis factor (ybhK).